A 453-amino-acid chain; its full sequence is Ribosome biogenesis protein SSF1 (453 aa).

The segment covering 1–11 (MAKRRQKKRTH) has biased composition (basic residues). 3 disordered regions span residues 1 to 22 (MAKR…EQGI), 275 to 324 (KAKH…PRKK), and 374 to 453 (KMRL…SEVE). Residues 26-348 (MVIRVGQTSL…LVKIEEGICS (323 aa)) form the Brix domain. Over residues 288–300 (PVEKKDNKEREKE) the composition is skewed to basic and acidic residues. Thr-301 is modified (phosphothreonine). Over residues 374–398 (KMRLKEQRKKEQEENIAKKKAVKDA) the composition is skewed to basic and acidic residues. Over residues 399-409 (KKQRKLERRKA) the composition is skewed to basic residues. Residues 410 to 423 (RAAEGGEGQGKDDA) are compositionally biased toward basic and acidic residues. A compositionally biased stretch (acidic residues) spans 442–453 (EDLDSDLFSEVE).

As to quaternary structure, part of a complex that includes BRX1, RPF1, RPF2 and SSF1 or SSF2.

It localises to the nucleus. The protein localises to the nucleolus. Required for biogenesis of the 60S ribosomal subunit. The protein is Ribosome biogenesis protein SSF1 (SSF1) of Saccharomyces cerevisiae (strain ATCC 204508 / S288c) (Baker's yeast).